The following is a 278-amino-acid chain: HTH-type transcriptional activator RhaS (278 aa).

The HTH araC/xylS-type domain occupies 174 to 272; that stretch reads NLLLAWLEDH…NWSPRDIRQG (99 aa). 2 consecutive DNA-binding regions (H-T-H motif) follow at residues 191–212 and 239–262; these read DAVA…KQQT and VTDI…RREF.

Binds DNA as a dimer.

The protein resides in the cytoplasm. Its function is as follows. Activates expression of the rhaBAD and rhaT operons. The polypeptide is HTH-type transcriptional activator RhaS (Escherichia coli O81 (strain ED1a)).